A 215-amino-acid chain; its full sequence is Ribonuclease T (215 aa).

The 175-residue stretch at 20–194 (VVIDVETAGF…YDTERTAVLF (175 aa)) folds into the Exonuclease domain. Residues aspartate 23, glutamate 25, histidine 181, and aspartate 186 each contribute to the Mg(2+) site. Residue histidine 181 is the Proton donor/acceptor of the active site.

Belongs to the RNase T family. In terms of assembly, homodimer. It depends on Mg(2+) as a cofactor.

Trims short 3' overhangs of a variety of RNA species, leaving a one or two nucleotide 3' overhang. Responsible for the end-turnover of tRNA: specifically removes the terminal AMP residue from uncharged tRNA (tRNA-C-C-A). Also appears to be involved in tRNA biosynthesis. The polypeptide is Ribonuclease T (Salmonella choleraesuis (strain SC-B67)).